We begin with the raw amino-acid sequence, 147 residues long: Hemoglobin subunit gamma (147 aa).

Positions 3 to 147 constitute a Globin domain; sequence NFTAEDKAAI…VASALASRYH (145 aa). H64 and H93 together coordinate heme b.

Belongs to the globin family. As to quaternary structure, heterotetramer of two alpha chains and two gamma chains in fetal hemoglobin (Hb F). Red blood cells.

Gamma chains make up the fetal hemoglobin F, in combination with alpha chains. This Alouatta seniculus (Red howler monkey) protein is Hemoglobin subunit gamma (HBG).